A 128-amino-acid chain; its full sequence is Holo-[acyl-carrier-protein] synthase (128 aa).

The Mg(2+) site is built by D8 and E58.

This sequence belongs to the P-Pant transferase superfamily. AcpS family. It depends on Mg(2+) as a cofactor.

It localises to the cytoplasm. The catalysed reaction is apo-[ACP] + CoA = holo-[ACP] + adenosine 3',5'-bisphosphate + H(+). Transfers the 4'-phosphopantetheine moiety from coenzyme A to a Ser of acyl-carrier-protein. The sequence is that of Holo-[acyl-carrier-protein] synthase from Alkalilimnicola ehrlichii (strain ATCC BAA-1101 / DSM 17681 / MLHE-1).